The primary structure comprises 84 residues: Small ribosomal subunit protein uS17 (84 aa).

Belongs to the universal ribosomal protein uS17 family. Part of the 30S ribosomal subunit.

One of the primary rRNA binding proteins, it binds specifically to the 5'-end of 16S ribosomal RNA. This Salmonella typhi protein is Small ribosomal subunit protein uS17.